The chain runs to 433 residues: Serine hydroxymethyltransferase (433 aa).

Residues Leu-127 and 131-133 (GHL) each bind (6S)-5,6,7,8-tetrahydrofolate. The residue at position 236 (Lys-236) is an N6-(pyridoxal phosphate)lysine.

This sequence belongs to the SHMT family. As to quaternary structure, homodimer. Requires pyridoxal 5'-phosphate as cofactor.

It localises to the cytoplasm. It carries out the reaction (6R)-5,10-methylene-5,6,7,8-tetrahydrofolate + glycine + H2O = (6S)-5,6,7,8-tetrahydrofolate + L-serine. Its pathway is one-carbon metabolism; tetrahydrofolate interconversion. It functions in the pathway amino-acid biosynthesis; glycine biosynthesis; glycine from L-serine: step 1/1. Its function is as follows. Catalyzes the reversible interconversion of serine and glycine with tetrahydrofolate (THF) serving as the one-carbon carrier. This reaction serves as the major source of one-carbon groups required for the biosynthesis of purines, thymidylate, methionine, and other important biomolecules. Also exhibits THF-independent aldolase activity toward beta-hydroxyamino acids, producing glycine and aldehydes, via a retro-aldol mechanism. In Corynebacterium urealyticum (strain ATCC 43042 / DSM 7109), this protein is Serine hydroxymethyltransferase.